Here is a 365-residue protein sequence, read N- to C-terminus: uncharacterized protein (365 aa).

Disordered regions lie at residues 218–262 (QRPS…AEAA) and 315–342 (PRLP…RTPC). 2 stretches are compositionally biased toward basic and acidic residues: residues 239–257 (PDNR…KDPE) and 331–341 (MEFRNLSDRTP).

This is an uncharacterized protein from Mus musculus (Mouse).